The following is a 211-amino-acid chain: Histone H1-beta, late embryonic (211 aa).

Disordered regions lie at residues 1 to 22 and 81 to 211; these read MAAEQKKVAKKPRAKPAHPSSS and KGAS…AAKK. The region spanning 17-91 is the H15 domain; it reads AHPSSSEMVL…GASGSFKLGK (75 aa). Composition is skewed to basic and acidic residues over residues 95-107 and 114-123; these read GKSDAQKAPDAAK and KKKEAKEKKA. Basic residues-rich tracts occupy residues 124-177 and 185-211; these read ARSK…KKAA and KAAKKPAAKKAAKKVAKKPAAKKAAKK.

The protein belongs to the histone H1/H5 family.

Its subcellular location is the nucleus. The protein resides in the chromosome. Functionally, histones H1 are necessary for the condensation of nucleosome chains into higher-order structures. The sequence is that of Histone H1-beta, late embryonic from Strongylocentrotus purpuratus (Purple sea urchin).